Here is a 445-residue protein sequence, read N- to C-terminus: MDIKNVTETISMIEEQNFDIRTITMGISLLDCIDSDINKACDKIYAKITTKAKDLVRVGNEISAELGIPIVNKRVSVTPISIIGAATNASDYVMIAKTLDRAAIEVGIDFIGGFSALVQKGYQKGDEILINSIPQALAQTAKVCSSVNVGSTKSGINMSAVRDMGRIIKETAAASEMGCAKLVVFANAVEDNPFMAGAFHGVGEADVVINVGVSGPGVVKRALEKVRGESFDVVAETVKKTAFKITRIGQLVGQMASERLGVKFGIVDLSLAPTPAVGDSVARVLEEMGLEAVGTHGTTAALALLNDAVKKGGVMACNQVGGLSGAFIPVSEDEGMIAAVRAGSLNLEKLEAMTAICSVGLDMIAIPADTPSESIAAMIADEAAIGVINQKTTAVRIIPLGREGDMIEFGGLLGRAPVMKINKASSADFIARGGQIPAPIHSFKN.

The protein belongs to the UPF0210 family. In terms of assembly, homodimer.

The polypeptide is UPF0210 protein Ccon26_06850 (Campylobacter concisus (strain 13826)).